A 166-amino-acid polypeptide reads, in one-letter code: RNA pyrophosphohydrolase (166 aa).

In terms of domain architecture, Nudix hydrolase spans 6-149; sequence GFRPNVGIIL…KRDVYRKAMM (144 aa). The Nudix box signature appears at 38-59; that stretch reads GGIHFGETPEQALYRELREEVG.

Belongs to the Nudix hydrolase family. RppH subfamily. The cofactor is a divalent metal cation.

Functionally, accelerates the degradation of transcripts by removing pyrophosphate from the 5'-end of triphosphorylated RNA, leading to a more labile monophosphorylated state that can stimulate subsequent ribonuclease cleavage. This chain is RNA pyrophosphohydrolase, found in Acinetobacter baylyi (strain ATCC 33305 / BD413 / ADP1).